The chain runs to 580 residues: MSQPLETFDVIVIGAGWYGLMAARTFLELAPDTNLLILDDGKTVGGVWSKERIYPSLFAQISHPLFEYSFYPMPEEDISPDGFVSGKTIQKYLEAFAKDHGLILHLRLETRVEKVKRGVNSNEWILEIKGDKPLACSKLIYATGANSSPIIPKWPREGFEKPVIHSLDLGRYQDYIANNVQKAVVVGRSKSSYDAVYHLLCAGKKVNWVMRDGQSGPFSLYAPTFMGLWNIADHISTRFASSFSPCIMSTDGFCYNFFQRSALGRVLTNMYWRTANYLSVSHAEYWRTENSEKLRPRPYSDGVFWGSGGIGIATAPDFWETFHRGDVTIHSTEIESVSHKDVTNLKNGYSIATDIIIHCTGFDKGYGAFDPQLRNELGLEYNTKEFSRWTMLDEKADQTVDRLLPYICDSPNQYGDSEASRSTGQGPNRHYRRLVVPELAARGDRSILFPGHIHSAFTPLAAELQALWGVSWMLGWRDLPSKEEMETEAANFNAWTRKRYLEQGRKHSYFIYDYIPYIDTLMKDLGLDPFRKSNVFEEWFVRYKPSDYKTILEEYRSVRRHEREMERSGEESVARMKRCD.

Position 47-50 (47-50) interacts with FAD; the sequence is VWSK. An NADP(+)-binding site is contributed by 58-60; that stretch reads FAQ. Val112 is a binding site for FAD. NADP(+) contacts are provided by residues 186–205, 222–223, and 354–355; these read VGRS…AGKK, AP, and DI. Residue Met473 coordinates FAD.

Belongs to the FAD-binding monooxygenase family. Requires FAD as cofactor.

It participates in polyketide biosynthesis. Its function is as follows. Part of the gene cluster that mediates the biosynthesis of depudecin, a highly oxidized eleven-carbon linear polyketide that acts as a histone deacetylase (HDAC) inhibitor and makes a small contribution to pathogenesis. The reducing polyketide synthase DEP5 is the central enzyme in depudecin biosynthesis by yielding the backbone polyketide chain. The monooxygenases DEP2 and DEP4, as well as the uncharacterized protein DEP1, then act as tailoring enzymes to modify the intermediate polyketide chain into depudecin. This Fusarium langsethiae protein is FAD-dependent monooxygenase DEP4.